A 472-amino-acid chain; its full sequence is Flotillin-like protein 6 (472 aa).

The S-palmitoyl cysteine moiety is linked to residue C37. The stretch at 237–327 (ENQREAEVAQ…ELYKKQKEAE (91 aa)) forms a coiled coil.

Belongs to the band 7/mec-2 family. Flotillin subfamily. In terms of processing, may be palmitoylated. Very low occasional expression in roots and nodules.

The protein resides in the cell membrane. It is found in the membrane. The protein localises to the caveola. Functionally, may act as a scaffolding protein within caveolar membranes, functionally participating in formation of caveolae or caveolae-like vesicles. May be involved in nodule formation. The protein is Flotillin-like protein 6 (FLOT6) of Medicago truncatula (Barrel medic).